A 98-amino-acid polypeptide reads, in one-letter code: Large ribosomal subunit protein eL21 (98 aa).

The interval 1-22 (MVQMSEGFRRKTRKKLSKHPRE) is disordered. The segment covering 10-21 (RKTRKKLSKHPR) has biased composition (basic residues).

The protein belongs to the eukaryotic ribosomal protein eL21 family.

This chain is Large ribosomal subunit protein eL21 (rpl21e), found in Methanocaldococcus jannaschii (strain ATCC 43067 / DSM 2661 / JAL-1 / JCM 10045 / NBRC 100440) (Methanococcus jannaschii).